Consider the following 344-residue polypeptide: Methionine import ATP-binding protein MetN (344 aa).

The 240-residue stretch at 2-241 folds into the ABC transporter domain; sequence IELQGLSQRF…PQHEVTRAMI (240 aa). 38-45 serves as a coordination point for ATP; it reads GRSGAGKS.

Belongs to the ABC transporter superfamily. Methionine importer (TC 3.A.1.24) family. As to quaternary structure, the complex is composed of two ATP-binding proteins (MetN), two transmembrane proteins (MetI) and a solute-binding protein (MetQ).

It is found in the cell inner membrane. The enzyme catalyses L-methionine(out) + ATP + H2O = L-methionine(in) + ADP + phosphate + H(+). It carries out the reaction D-methionine(out) + ATP + H2O = D-methionine(in) + ADP + phosphate + H(+). Its function is as follows. Part of the ABC transporter complex MetNIQ involved in methionine import. Responsible for energy coupling to the transport system. In Cupriavidus metallidurans (strain ATCC 43123 / DSM 2839 / NBRC 102507 / CH34) (Ralstonia metallidurans), this protein is Methionine import ATP-binding protein MetN.